The sequence spans 522 residues: Penicillin-sensitive carboxypeptidase A (522 aa).

The active-site Acyl-ester intermediate is S94. The active-site Proton acceptor is K97. S351 is an active-site residue. K461 provides a ligand contact to substrate.

It belongs to the peptidase S13 family.

It carries out the reaction Preferential cleavage: (Ac)2-L-Lys-D-Ala-|-D-Ala. Also transpeptidation of peptidyl-alanyl moieties that are N-acyl substituents of D-alanine.. Inhibited by penicillin G. Functionally, carboxypeptidase. The polypeptide is Penicillin-sensitive carboxypeptidase A (pscA) (Dictyostelium discoideum (Social amoeba)).